Reading from the N-terminus, the 88-residue chain is Enticin (88 aa).

Positions 1–19 (MKTALPLLLLTCLVAAVQS) are cleaved as a signal peptide. 3 cysteine pairs are disulfide-bonded: C25-C33, C40-C52, and C59-C67. The propeptide occupies 69–88 (REQSQLNHDHLNNHTTTQQP).

As to quaternary structure, binds to attractin and temptin.

It localises to the secreted. Its function is as follows. A component of the complex of water-borne protein pheromones that stimulates attraction and mating behavior. The protein is Enticin of Aplysia californica (California sea hare).